The following is a 1319-amino-acid chain: Girdin homolog (1319 aa).

The Calponin-homology (CH) domain maps to 6-118 (ENWSHPLAFW…KLLLLLLGCA (113 aa)). 3 coiled-coil regions span residues 141 to 173 (ELAACIQKLTESDEIVQNLEDFERRKMKETDEV), 218 to 690 (TSEL…ADLI), and 732 to 1096 (KRER…KKST). The segment at 166 to 222 (KMKETDEVGGGGGSIEDVDSDDMESSTTSSSNGEIAIKQQDQSFLMSRSTSPTSELR) is disordered. A compositionally biased stretch (polar residues) spans 204-222 (QQDQSFLMSRSTSPTSELR). Disordered stretches follow at residues 1112–1236 (INRR…SPAH) and 1289–1308 (NVNLPQNPPDLPENSDLKPN). The segment covering 1118 to 1131 (TSNGGSTTEDSSVY) has biased composition (polar residues).

It belongs to the CCDC88 family. As to expression, expressed in AQR and PQR gas-sensing neurons in hermaphrodites (at protein level).

Its subcellular location is the cytoplasm. It localises to the cytoskeleton. The protein resides in the cilium basal body. It is found in the microtubule organizing center. The protein localises to the centrosome. Its subcellular location is the centriole. Scaffolding protein that plays a role in ciliogenesis, cilium positioning and dendrite anchoring in sensory amphid neurons including AWB, AWA, AWC, ADL and ASI, the phasmid neurons PHA and PHB and the gas sensing neurons AQR, PQR, URX and BAG. Its role in cilium positioning may be through regulation of the localization of cell adhesion proteins such as the apical junction protein ajm-1, and the ciliary scaffolding protein Rootletin/che-10. Plays a more prominent role in regulating dendrite morphogenesis in AQR than in PQR neurons. Regulates localization of hmr-1 to the distal AQR dendrite. During embryonic elongation, required for the anchoring of URX and BAG dendrites to the presumptive nose. The chain is Girdin homolog from Caenorhabditis elegans.